Here is a 270-residue protein sequence, read N- to C-terminus: 2-C-methyl-D-erythritol 4-phosphate cytidylyltransferase (270 aa).

A disordered region spans residues 1–33; that stretch reads MSDESRPSPAETPATTFAETSAETSAAGRSPAR. Positions 7-27 are enriched in low complexity; that stretch reads PSPAETPATTFAETSAETSAA.

It belongs to the IspD/TarI cytidylyltransferase family. IspD subfamily.

The catalysed reaction is 2-C-methyl-D-erythritol 4-phosphate + CTP + H(+) = 4-CDP-2-C-methyl-D-erythritol + diphosphate. It participates in isoprenoid biosynthesis; isopentenyl diphosphate biosynthesis via DXP pathway; isopentenyl diphosphate from 1-deoxy-D-xylulose 5-phosphate: step 2/6. Catalyzes the formation of 4-diphosphocytidyl-2-C-methyl-D-erythritol from CTP and 2-C-methyl-D-erythritol 4-phosphate (MEP). The protein is 2-C-methyl-D-erythritol 4-phosphate cytidylyltransferase of Streptomyces coelicolor (strain ATCC BAA-471 / A3(2) / M145).